Consider the following 465-residue polypeptide: Polyadenylation factor subunit 2 (465 aa).

Residues 1 to 20 (MDGHNQNQYQNQNQIQQSQQ) show a composition bias toward low complexity. Positions 1–26 (MDGHNQNQYQNQNQIQQSQQPPLKKY) are disordered. WD repeat units lie at residues 133–163 (AHDSAVTTMKYSHDSDWMISGDADGMIKIWQ), 175–205 (AHTESIRDMAFSSNDSKFVTCSDDNILKIWN), 217–247 (GHHWDVKSCDWHPEMGLIASASKDNLVKLWD), 259–290 (KFKHTVLKTRFQPTKGNLLMAISKDKSCRVFD), and 348–378 (AHDKCITSLSYNPVGHIFATAAKDRTIRFWT). Residues 417–465 (EFGAAPPPPATLEPHALPNMNGFINKKPRQEIPGIDSNIKSSTLPGLSI) form a disordered region. Residues 454-465 (NIKSSTLPGLSI) are compositionally biased toward polar residues.

Component of the cleavage and polyadenylation factor (CPF) complex, which is composed of at least PTI1, SYC1, SSU72, GLC7, MPE1, REF2, PFS2, PTA1, YSH1/BRR5, SWD2, CFT2/YDH1, YTH1, CFT1/YHH1, FIP1 and PAP1. Interacts with YSH1/BRR5, FIP1 and RNA14.

Its subcellular location is the nucleus. Integral and essential component of the cleavage and polyadenylation factor (CPF) complex, which plays a key role in polyadenylation-dependent pre-mRNA 3'-end formation and cooperates with cleavage factors including the CFIA complex and NAB4/CFIB. May bridge the CPF and CFIA complexes. The sequence is that of Polyadenylation factor subunit 2 (PFS2) from Saccharomyces cerevisiae (strain ATCC 204508 / S288c) (Baker's yeast).